The chain runs to 321 residues: Isoaspartyl peptidase (321 aa).

Catalysis depends on Thr179, which acts as the Nucleophile. Substrate-binding positions include 207–210 (RVGD) and 230–233 (TGTG).

It belongs to the Ntn-hydrolase family. As to quaternary structure, heterotetramer of two alpha and two beta chains arranged as a dimer of alpha/beta heterodimers. Autocleaved. Generates the alpha and beta subunits. The N-terminal residue of the beta subunit is thought to be responsible for the nucleophile hydrolase activity. In terms of processing, both subunits undergo further processing at their C-termini. The overexpressed alpha subunit seems to consist of residues 2-161, with an oxidized Met residue and a tightly coordinated Na(+), whereas the overexpressed beta subunit is processed to residue 315 and has 3 oxidized Met residues. Processing of the alpha subunit is inhibited by Zn(2+).

It carries out the reaction Cleavage of a beta-linked Asp residue from the N-terminus of a polypeptide.. Functionally, degrades proteins damaged by L-isoaspartyl residue formation (also known as beta-Asp residues). Degrades L-isoaspartyl-containing di- and maybe also tripeptides. Also has L-asparaginase activity, although this may not be its principal function. May be involved in glutathione, and possibly other peptide, transport, although these results could also be due to polar effects of disruption. The sequence is that of Isoaspartyl peptidase (iaaA) from Escherichia coli (strain K12).